A 162-amino-acid chain; its full sequence is uncharacterized protein (162 aa).

This is an uncharacterized protein from Rhodobacter capsulatus (Rhodopseudomonas capsulata).